The chain runs to 328 residues: Peroxidase 25 (328 aa).

The N-terminal stretch at 1–26 (MGVYLGKYCYIMIIMLVLVLGKEVRS) is a signal peptide. Cystine bridges form between cysteine 38–cysteine 114, cysteine 71–cysteine 76, cysteine 120–cysteine 324, and cysteine 198–cysteine 230. Histidine 69 serves as the catalytic Proton acceptor. Residues aspartate 70, valine 73, glycine 75, aspartate 77, and serine 79 each contribute to the Ca(2+) site. Substrate is bound at residue proline 161. A heme b-binding site is contributed by histidine 191. Residue threonine 192 coordinates Ca(2+). A glycan (N-linked (GlcNAc...) asparagine) is linked at asparagine 207. Positions 243, 246, and 251 each coordinate Ca(2+).

It belongs to the peroxidase family. Classical plant (class III) peroxidase subfamily. Heme b is required as a cofactor. Requires Ca(2+) as cofactor.

The protein localises to the secreted. It catalyses the reaction 2 a phenolic donor + H2O2 = 2 a phenolic radical donor + 2 H2O. Removal of H(2)O(2), oxidation of toxic reductants, biosynthesis and degradation of lignin, suberization, auxin catabolism, response to environmental stresses such as wounding, pathogen attack and oxidative stress. These functions might be dependent on each isozyme/isoform in each plant tissue. The protein is Peroxidase 25 (PER25) of Arabidopsis thaliana (Mouse-ear cress).